A 341-amino-acid polypeptide reads, in one-letter code: Anthranilate phosphoribosyltransferase (341 aa).

5-phospho-alpha-D-ribose 1-diphosphate-binding positions include glycine 81, 84–85, serine 89, 91–94, 109–117, and serine 121; these read GD, NIST, and KHGNRSASS. An anthranilate-binding site is contributed by glycine 81. Serine 93 contacts Mg(2+). Asparagine 112 contributes to the anthranilate binding site. Arginine 167 contributes to the anthranilate binding site. Mg(2+)-binding residues include aspartate 225 and glutamate 226.

Belongs to the anthranilate phosphoribosyltransferase family. As to quaternary structure, homodimer. It depends on Mg(2+) as a cofactor.

It carries out the reaction N-(5-phospho-beta-D-ribosyl)anthranilate + diphosphate = 5-phospho-alpha-D-ribose 1-diphosphate + anthranilate. It functions in the pathway amino-acid biosynthesis; L-tryptophan biosynthesis; L-tryptophan from chorismate: step 2/5. In terms of biological role, catalyzes the transfer of the phosphoribosyl group of 5-phosphorylribose-1-pyrophosphate (PRPP) to anthranilate to yield N-(5'-phosphoribosyl)-anthranilate (PRA). The polypeptide is Anthranilate phosphoribosyltransferase (Nocardioides sp. (strain ATCC BAA-499 / JS614)).